The primary structure comprises 128 residues: MATSMLGSLLRIVRQVVPSSASGQARSYYVDWRMLRDVKRRKMAYEYADERLRINSLRKNTILPKHLQEVADEEIAALPRDSCPVRIRNRCVMTSRPRGVKRRWRLSRIVFRHLADHGQLSGIQRAIW.

This sequence belongs to the universal ribosomal protein uS14 family. As to quaternary structure, component of the mitochondrial ribosome small subunit (28S) which comprises a 12S rRNA and about 30 distinct proteins. Interacts with LIAT1.

The protein resides in the mitochondrion. The chain is Small ribosomal subunit protein uS14m (MRPS14) from Bos taurus (Bovine).